The following is a 285-amino-acid chain: Shikimate dehydrogenase (NADP(+)) (285 aa).

Shikimate is bound by residues 20 to 22 (SRS) and Thr-67. The active-site Proton acceptor is Lys-71. 2 residues coordinate shikimate: Asn-93 and Asp-108. Residues 132–136 (GAGGA) and Met-224 each bind NADP(+). Residue Tyr-226 participates in shikimate binding. Gly-248 contributes to the NADP(+) binding site.

The protein belongs to the shikimate dehydrogenase family. As to quaternary structure, homodimer.

It catalyses the reaction shikimate + NADP(+) = 3-dehydroshikimate + NADPH + H(+). It participates in metabolic intermediate biosynthesis; chorismate biosynthesis; chorismate from D-erythrose 4-phosphate and phosphoenolpyruvate: step 4/7. Its function is as follows. Involved in the biosynthesis of the chorismate, which leads to the biosynthesis of aromatic amino acids. Catalyzes the reversible NADPH linked reduction of 3-dehydroshikimate (DHSA) to yield shikimate (SA). The protein is Shikimate dehydrogenase (NADP(+)) of Bordetella avium (strain 197N).